A 128-amino-acid chain; its full sequence is Cytochrome c-type biogenesis protein CcmE (128 aa).

At M1 to R7 the chain is on the cytoplasmic side. Residues L8–I28 traverse the membrane as a helical; Signal-anchor for type II membrane protein segment. At L29–K128 the chain is on the extracellular side. Positions 120 and 124 each coordinate heme.

This sequence belongs to the CcmE/CycJ family.

It localises to the cell membrane. Its function is as follows. Heme chaperone required for the biogenesis of c-type cytochromes. Transiently binds heme delivered by CcmC and transfers the heme to apo-cytochromes in a process facilitated by CcmF and CcmH. In Wolbachia sp. subsp. Brugia malayi (strain TRS), this protein is Cytochrome c-type biogenesis protein CcmE.